A 544-amino-acid polypeptide reads, in one-letter code: Chaperonin GroEL (544 aa).

Residues 30 to 33, Lys51, 87 to 91, Gly415, and Asp495 each bind ATP; these read TLGP and DGTTT.

The protein belongs to the chaperonin (HSP60) family. In terms of assembly, forms a cylinder of 14 subunits composed of two heptameric rings stacked back-to-back. Interacts with the co-chaperonin GroES.

It localises to the cytoplasm. The catalysed reaction is ATP + H2O + a folded polypeptide = ADP + phosphate + an unfolded polypeptide.. Together with its co-chaperonin GroES, plays an essential role in assisting protein folding. The GroEL-GroES system forms a nano-cage that allows encapsulation of the non-native substrate proteins and provides a physical environment optimized to promote and accelerate protein folding. The sequence is that of Chaperonin GroEL from Neisseria meningitidis serogroup B (strain ATCC BAA-335 / MC58).